Reading from the N-terminus, the 188-residue chain is uncharacterized protein (188 aa).

Positions 121 to 142 (ADTLSRKNKRSSDQKRNGQHFE) are disordered. Over residues 130–142 (RSSDQKRNGQHFE) the composition is skewed to basic and acidic residues.

This sequence belongs to the chlamydial CPn_0422/CT_273/TC_0545 family.

This is an uncharacterized protein from Chlamydia trachomatis serovar D (strain ATCC VR-885 / DSM 19411 / UW-3/Cx).